A 120-amino-acid chain; its full sequence is Chaperonin GroEL (120 aa).

Position 23-27 (23-27 (DGTTT)) interacts with ATP.

The protein belongs to the chaperonin (HSP60) family. As to quaternary structure, forms a cylinder of 14 subunits composed of two heptameric rings stacked back-to-back. Interacts with the co-chaperonin GroES.

The protein resides in the cytoplasm. It catalyses the reaction ATP + H2O + a folded polypeptide = ADP + phosphate + an unfolded polypeptide.. In terms of biological role, together with its co-chaperonin GroES, plays an essential role in assisting protein folding. The GroEL-GroES system forms a nano-cage that allows encapsulation of the non-native substrate proteins and provides a physical environment optimized to promote and accelerate protein folding. This is Chaperonin GroEL from Mycobacterium shimoidei.